The sequence spans 338 residues: Acyl-CoA-binding domain-containing protein 1 (338 aa).

A helical; Signal-anchor transmembrane segment spans residues 11–31 (IIFGLIFAYLLAKLISILLAF). N-linked (GlcNAc...) asparagine glycans are attached at residues Asn35 and Asn41. A disordered region spans residues 69–89 (AEQGSLRGDEDESDDDDWEGV). Over residues 77 to 89 (DEDESDDDDWEGV) the composition is skewed to acidic residues. Positions 94-184 (LDEAFSAATA…VTQLYPAWVE (91 aa)) constitute an ACB domain. An acyl-CoA contacts are provided by residues 126-130 (YGLYK), Lys152, and Tyr171. N-linked (GlcNAc...) asparagine glycosylation occurs at Asn191. ANK repeat units follow at residues 217-246 (LKID…PVNA), 250-279 (EGRT…DVNA), 283-312 (EGQT…DTTI), and 316-338 (DGNS…KDSN).

It belongs to the ACBP family. In terms of assembly, interacts with RAP2-12. Binds to SMO1-1 and SMO1-2. Glycosylated. In seeds, localized in the outer integument. Expressed at low levels in roots, stems, leaves, flowers, and siliques, especially within seeds.

It localises to the cell membrane. The protein localises to the secreted. Its subcellular location is the cell wall. It is found in the endoplasmic reticulum membrane. Binds medium- and long-chain acyl-CoA esters with very high affinity. Can interact in vitro with arachidonyl-CoA, barely with oleoyl-CoA, but not with palmitoyl-CoA. Confers tolerance and binds to lead ions Pb(2+), probably by promoting lead translocation from roots to shoots. May function as an intracellular carrier of acyl-CoA esters. Modulates negatively sterol synthesis during embryogenesis and gametophytes development via interactions with SMO1-1 and SMO1-2; sterols serve as lipid modulators for gene expression of homeodomain-leucine zipper IV transcription factors. This chain is Acyl-CoA-binding domain-containing protein 1, found in Arabidopsis thaliana (Mouse-ear cress).